The primary structure comprises 228 residues: Ankyrin repeat domain-containing protein 46 (228 aa).

ANK repeat units follow at residues 11 to 40, 44 to 73, 77 to 103, and 107 to 138; these read QTSVPLLQACIDGDLSFARRLLETGCDPNI, RGRTGLHLAAARGNVDICRFLHKFGADLLA, QGNTALHLCGHVDTIQFLVSNGLKIDI, and NGSTPLVLAKRRGVNKDAIRLLEGLEEQEVKG. A helical membrane pass occupies residues 195–215; it reads VLLLLVVIALLSLGIAYYVSG.

It is found in the membrane. This Danio rerio (Zebrafish) protein is Ankyrin repeat domain-containing protein 46 (ankrd46).